The following is a 182-amino-acid chain: Adenine phosphoribosyltransferase (182 aa).

This sequence belongs to the purine/pyrimidine phosphoribosyltransferase family. Homodimer.

The protein resides in the cytoplasm. It catalyses the reaction AMP + diphosphate = 5-phospho-alpha-D-ribose 1-diphosphate + adenine. Its pathway is purine metabolism; AMP biosynthesis via salvage pathway; AMP from adenine: step 1/1. Its function is as follows. Catalyzes a salvage reaction resulting in the formation of AMP, that is energically less costly than de novo synthesis. The polypeptide is Adenine phosphoribosyltransferase (Renibacterium salmoninarum (strain ATCC 33209 / DSM 20767 / JCM 11484 / NBRC 15589 / NCIMB 2235)).